We begin with the raw amino-acid sequence, 87 residues long: Small ribosomal subunit protein bS20 (87 aa).

Over residues 1 to 11 the composition is skewed to basic residues; the sequence is MANIKSAKKRA. Positions 1–27 are disordered; it reads MANIKSAKKRAVQSEKRRQHNASQRSM.

This sequence belongs to the bacterial ribosomal protein bS20 family.

In terms of biological role, binds directly to 16S ribosomal RNA. The polypeptide is Small ribosomal subunit protein bS20 (Histophilus somni (strain 129Pt) (Haemophilus somnus)).